The chain runs to 1022 residues: Probable beta-galactosidase B (1022 aa).

The first 20 residues, 1–20, serve as a signal peptide directing secretion; the sequence is MARFPQLLFLLLASIGLLSA. Asn-23 is a glycosylation site (N-linked (GlcNAc...) asparagine). Residue Tyr-90 coordinates substrate. Asn-100 is a glycosylation site (N-linked (GlcNAc...) asparagine). Substrate-binding residues include Asn-135, Ala-136, Glu-137, and Asn-195. The active-site Proton donor is the Glu-196. The N-linked (GlcNAc...) asparagine glycan is linked to Asn-211. Tyr-265 is a substrate binding site. Cys-271 and Cys-324 are joined by a disulfide. The active-site Nucleophile is the Glu-308. Tyr-373 is a binding site for substrate. N-linked (GlcNAc...) asparagine glycans are attached at residues Asn-411, Asn-456, Asn-541, Asn-554, Asn-626, Asn-777, Asn-790, Asn-832, Asn-880, and Asn-881.

This sequence belongs to the glycosyl hydrolase 35 family.

The protein resides in the secreted. It catalyses the reaction Hydrolysis of terminal non-reducing beta-D-galactose residues in beta-D-galactosides.. In terms of biological role, cleaves beta-linked terminal galactosyl residues from gangliosides, glycoproteins, and glycosaminoglycans. This chain is Probable beta-galactosidase B (lacB), found in Aspergillus terreus (strain NIH 2624 / FGSC A1156).